A 396-amino-acid chain; its full sequence is S-adenosylmethionine synthase (396 aa).

His14 provides a ligand contact to ATP. Residue Asp16 coordinates Mg(2+). K(+) is bound at residue Glu42. L-methionine contacts are provided by Glu55 and Gln98. A flexible loop region spans residues 98 to 108; that stretch reads QSPDIALGVNE. ATP-binding positions include 174–176, 241–242, Asp250, 256–257, Ala273, and Lys277; these read DGK, RF, and RK. Position 250 (Asp250) interacts with L-methionine. Lys281 serves as a coordination point for L-methionine.

It belongs to the AdoMet synthase family. In terms of assembly, homotetramer; dimer of dimers. Mg(2+) is required as a cofactor. It depends on K(+) as a cofactor.

Its subcellular location is the cytoplasm. It carries out the reaction L-methionine + ATP + H2O = S-adenosyl-L-methionine + phosphate + diphosphate. Its pathway is amino-acid biosynthesis; S-adenosyl-L-methionine biosynthesis; S-adenosyl-L-methionine from L-methionine: step 1/1. Functionally, catalyzes the formation of S-adenosylmethionine (AdoMet) from methionine and ATP. The overall synthetic reaction is composed of two sequential steps, AdoMet formation and the subsequent tripolyphosphate hydrolysis which occurs prior to release of AdoMet from the enzyme. The protein is S-adenosylmethionine synthase of Fervidobacterium nodosum (strain ATCC 35602 / DSM 5306 / Rt17-B1).